The sequence spans 419 residues: Gamma-glutamyl phosphate reductase (419 aa).

It belongs to the gamma-glutamyl phosphate reductase family.

Its subcellular location is the cytoplasm. It carries out the reaction L-glutamate 5-semialdehyde + phosphate + NADP(+) = L-glutamyl 5-phosphate + NADPH + H(+). The protein operates within amino-acid biosynthesis; L-proline biosynthesis; L-glutamate 5-semialdehyde from L-glutamate: step 2/2. Its function is as follows. Catalyzes the NADPH-dependent reduction of L-glutamate 5-phosphate into L-glutamate 5-semialdehyde and phosphate. The product spontaneously undergoes cyclization to form 1-pyrroline-5-carboxylate. This is Gamma-glutamyl phosphate reductase from Maridesulfovibrio salexigens (strain ATCC 14822 / DSM 2638 / NCIMB 8403 / VKM B-1763) (Desulfovibrio salexigens).